A 111-amino-acid polypeptide reads, in one-letter code: Ribosome-binding factor A (111 aa).

This sequence belongs to the RbfA family. Monomer. Binds 30S ribosomal subunits, but not 50S ribosomal subunits or 70S ribosomes.

It is found in the cytoplasm. One of several proteins that assist in the late maturation steps of the functional core of the 30S ribosomal subunit. Associates with free 30S ribosomal subunits (but not with 30S subunits that are part of 70S ribosomes or polysomes). Required for efficient processing of 16S rRNA. May interact with the 5'-terminal helix region of 16S rRNA. This Helicobacter pylori (strain Shi470) protein is Ribosome-binding factor A.